A 533-amino-acid polypeptide reads, in one-letter code: 2-isopropylmalate synthase (533 aa).

In terms of domain architecture, Pyruvate carboxyltransferase spans I8–A269. Mn(2+) contacts are provided by D17, H208, H210, and N244. The tract at residues R408 to L533 is regulatory domain.

Belongs to the alpha-IPM synthase/homocitrate synthase family. LeuA type 1 subfamily. Homodimer. Mn(2+) serves as cofactor.

It localises to the cytoplasm. The enzyme catalyses 3-methyl-2-oxobutanoate + acetyl-CoA + H2O = (2S)-2-isopropylmalate + CoA + H(+). It participates in amino-acid biosynthesis; L-leucine biosynthesis; L-leucine from 3-methyl-2-oxobutanoate: step 1/4. In terms of biological role, catalyzes the condensation of the acetyl group of acetyl-CoA with 3-methyl-2-oxobutanoate (2-ketoisovalerate) to form 3-carboxy-3-hydroxy-4-methylpentanoate (2-isopropylmalate). The chain is 2-isopropylmalate synthase from Picosynechococcus sp. (strain ATCC 27264 / PCC 7002 / PR-6) (Agmenellum quadruplicatum).